Here is a 172-residue protein sequence, read N- to C-terminus: MIIYRDLISHDEMFSDIYKIREIADGLCLEVEGKMVSRTEGNIDDSLIGGNASAEGPEGEGTESTVITGVDIVMNHHLQETSFTKEAYKKYIKDYMKSIKGKLEEQRPERVKPFMTGAAEQIKHILANFKNYQFFIGENMNPDGMVALLDYREDGVTPYMIFFKDGLEMEKC.

One can recognise a TCTP domain in the interval 1 to 172 (MIIYRDLISH…FKDGLEMEKC (172 aa)). The residue at position 46 (Ser46) is a Phosphoserine; by PLK1. Ser53 carries the post-translational modification Phosphoserine. Ser64 carries the phosphoserine; by PLK1 modification. The required for reduction of TSC22D1 protein stability stretch occupies residues 70–172 (VDIVMNHHLQ…FKDGLEMEKC (103 aa)).

It belongs to the TCTP family. In terms of assembly, homodimer. Interacts with STEAP3. Interacts with TSC22D1; interaction results in the destabilization of TSC22D1 protein. Found in several healthy and tumoral cells including erythrocytes, hepatocytes, macrophages, platelets, keratinocytes, erythroleukemia cells, gliomas, melanomas, hepatoblastomas, and lymphomas. It cannot be detected in kidney and renal cell carcinoma (RCC). Expressed in placenta and prostate.

The protein localises to the cytoplasm. Its function is as follows. Involved in calcium binding and microtubule stabilization. Acts as a negative regulator of TSC22D1-mediated apoptosis, via interaction with and destabilization of TSC22D1 protein. In Homo sapiens (Human), this protein is Translationally-controlled tumor protein (TPT1).